Here is a 172-residue protein sequence, read N- to C-terminus: Crossover junction endodeoxyribonuclease RuvC (172 aa).

Residues aspartate 11, glutamate 70, and aspartate 142 contribute to the active site. Mg(2+) is bound by residues aspartate 11, glutamate 70, and aspartate 142.

The protein belongs to the RuvC family. In terms of assembly, homodimer which binds Holliday junction (HJ) DNA. The HJ becomes 2-fold symmetrical on binding to RuvC with unstacked arms; it has a different conformation from HJ DNA in complex with RuvA. In the full resolvosome a probable DNA-RuvA(4)-RuvB(12)-RuvC(2) complex forms which resolves the HJ. It depends on Mg(2+) as a cofactor.

The protein resides in the cytoplasm. It carries out the reaction Endonucleolytic cleavage at a junction such as a reciprocal single-stranded crossover between two homologous DNA duplexes (Holliday junction).. Its function is as follows. The RuvA-RuvB-RuvC complex processes Holliday junction (HJ) DNA during genetic recombination and DNA repair. Endonuclease that resolves HJ intermediates. Cleaves cruciform DNA by making single-stranded nicks across the HJ at symmetrical positions within the homologous arms, yielding a 5'-phosphate and a 3'-hydroxyl group; requires a central core of homology in the junction. The consensus cleavage sequence is 5'-(A/T)TT(C/G)-3'. Cleavage occurs on the 3'-side of the TT dinucleotide at the point of strand exchange. HJ branch migration catalyzed by RuvA-RuvB allows RuvC to scan DNA until it finds its consensus sequence, where it cleaves and resolves the cruciform DNA. This Hydrogenovibrio crunogenus (strain DSM 25203 / XCL-2) (Thiomicrospira crunogena) protein is Crossover junction endodeoxyribonuclease RuvC.